A 400-amino-acid chain; its full sequence is Phosphoglycerate kinase (400 aa).

Substrate is bound by residues 23 to 25 (DLN), R38, 61 to 64 (HFGR), R120, and R153. Residues K203, E325, and 355 to 358 (GGDT) contribute to the ATP site.

The protein belongs to the phosphoglycerate kinase family. As to quaternary structure, monomer.

It is found in the cytoplasm. It carries out the reaction (2R)-3-phosphoglycerate + ATP = (2R)-3-phospho-glyceroyl phosphate + ADP. It participates in carbohydrate degradation; glycolysis; pyruvate from D-glyceraldehyde 3-phosphate: step 2/5. In Methylorubrum extorquens (strain PA1) (Methylobacterium extorquens), this protein is Phosphoglycerate kinase.